A 428-amino-acid polypeptide reads, in one-letter code: MKKPFYKILYVQVLAAIVIGVLLGHFEPKLAVNMKPLGDGFIQLIKMVIGPIIFCTVVSGIAGMRDMKKVGRVGGKALLYFEVVSTFALVIGLVAGHIFNPGSGFNVDVNSIDAKAVAQYAAKAQSSSTVDFLLNIIPSTVVDAFAKGDILQILLIALLFGGALSAMGERAQMVTDFIDQIAHVFFRIVHVITRVAPIGAFGAMAFTIGKYGVVSLVPLLKLIGTFYLTAIIFVVVVLGIIARLTGFSIFRFVAYIKEELLIVLGTSSSESALPHLMEKMEKLGCSKSVVGLVVPTGYSFNLDGTNIYMTMAVIFISQALNIELTLTQQLTILAVAMLTSKGASGITGAGFITLAATLAVVPTIPVAGMVLILGIDRFMSECRALTNITGNGVACVVISAWERELDRTKLARVMSGDRGETVSATPAA.

The next 8 helical transmembrane spans lie at 5 to 27 (FYKILYVQVLAAIVIGVLLGHFE), 42 to 64 (IQLIKMVIGPIIFCTVVSGIAGM), 77 to 99 (ALLYFEVVSTFALVIGLVAGHIF), 150 to 167 (ILQILLIALLFGGALSAM), 188 to 210 (IVHVITRVAPIGAFGAMAFTIGK), 225 to 247 (TFYLTAIIFVVVVLGIIARLTGF), 314 to 336 (IFISQALNIELTLTQQLTILAVA), and 351 to 373 (FITLAATLAVVPTIPVAGMVLIL).

Belongs to the dicarboxylate/amino acid:cation symporter (DAACS) (TC 2.A.23) family.

The protein localises to the cell inner membrane. Responsible for the transport of dicarboxylates such as succinate, fumarate, and malate from the periplasm across the membrane. The polypeptide is C4-dicarboxylate transport protein 1 (dctA1) (Ralstonia nicotianae (strain ATCC BAA-1114 / GMI1000) (Ralstonia solanacearum)).